Consider the following 383-residue polypeptide: 8-amino-7-oxononanoate synthase (383 aa).

Arg21 contacts substrate. 108-109 contacts pyridoxal 5'-phosphate; that stretch reads GY. A substrate-binding site is contributed by His133. Ser179, His207, and Thr233 together coordinate pyridoxal 5'-phosphate. Lys236 carries the N6-(pyridoxal phosphate)lysine modification. Thr350 is a substrate binding site.

The protein belongs to the class-II pyridoxal-phosphate-dependent aminotransferase family. BioF subfamily. Homodimer. The cofactor is pyridoxal 5'-phosphate.

The enzyme catalyses 6-carboxyhexanoyl-[ACP] + L-alanine + H(+) = (8S)-8-amino-7-oxononanoate + holo-[ACP] + CO2. Its pathway is cofactor biosynthesis; biotin biosynthesis. Catalyzes the decarboxylative condensation of pimeloyl-[acyl-carrier protein] and L-alanine to produce 8-amino-7-oxononanoate (AON), [acyl-carrier protein], and carbon dioxide. The polypeptide is 8-amino-7-oxononanoate synthase (Yersinia pseudotuberculosis serotype IB (strain PB1/+)).